The primary structure comprises 320 residues: o-succinylbenzoate synthase (320 aa).

The Proton donor role is filled by K133. Mg(2+) contacts are provided by D161, E190, and D213. The Proton acceptor role is filled by K235.

The protein belongs to the mandelate racemase/muconate lactonizing enzyme family. MenC type 1 subfamily. A divalent metal cation serves as cofactor.

It carries out the reaction (1R,6R)-6-hydroxy-2-succinyl-cyclohexa-2,4-diene-1-carboxylate = 2-succinylbenzoate + H2O. It functions in the pathway quinol/quinone metabolism; 1,4-dihydroxy-2-naphthoate biosynthesis; 1,4-dihydroxy-2-naphthoate from chorismate: step 4/7. It participates in quinol/quinone metabolism; menaquinone biosynthesis. Functionally, converts 2-succinyl-6-hydroxy-2,4-cyclohexadiene-1-carboxylate (SHCHC) to 2-succinylbenzoate (OSB). The sequence is that of o-succinylbenzoate synthase from Escherichia coli O7:K1 (strain IAI39 / ExPEC).